The chain runs to 102 residues: Putative pterin-4-alpha-carbinolamine dehydratase (102 aa).

It belongs to the pterin-4-alpha-carbinolamine dehydratase family.

The catalysed reaction is (4aS,6R)-4a-hydroxy-L-erythro-5,6,7,8-tetrahydrobiopterin = (6R)-L-erythro-6,7-dihydrobiopterin + H2O. This is Putative pterin-4-alpha-carbinolamine dehydratase from Burkholderia cenocepacia (strain ATCC BAA-245 / DSM 16553 / LMG 16656 / NCTC 13227 / J2315 / CF5610) (Burkholderia cepacia (strain J2315)).